The sequence spans 384 residues: Deoxyguanosinetriphosphate triphosphohydrolase-like protein (384 aa).

Residues 63-199 (RLTHSLEVAT…ASLADDISYI (137 aa)) form the HD domain.

The protein belongs to the dGTPase family. Type 2 subfamily.

The sequence is that of Deoxyguanosinetriphosphate triphosphohydrolase-like protein from Rickettsia typhi (strain ATCC VR-144 / Wilmington).